The chain runs to 372 residues: Alanine dehydrogenase 1 (372 aa).

His-94 is an active-site residue. Position 170-200 (170-200 (TYVIFGGGVAATNAANVALGLNAKVIIIELN)) interacts with NAD(+).

Belongs to the AlaDH/PNT family.

The catalysed reaction is L-alanine + NAD(+) + H2O = pyruvate + NH4(+) + NADH + H(+). The protein operates within amino-acid degradation; L-alanine degradation via dehydrogenase pathway; NH(3) and pyruvate from L-alanine: step 1/1. Its function is as follows. May play a role in cell wall synthesis as L-alanine is an important constituent of the peptidoglycan layer. The protein is Alanine dehydrogenase 1 (ald1) of Staphylococcus aureus (strain NCTC 8325 / PS 47).